The sequence spans 564 residues: Mitochondrial distribution and morphology protein 34-1 (564 aa).

The 195-residue stretch at 1-195 folds into the SMP-LTD domain; the sequence is MAFKFNWSPL…LPAIIHRLSL (195 aa). 2 stretches are compositionally biased toward polar residues: residues 297 to 322 and 329 to 352; these read PDQNDSSASVMSPISPPLSRTQSQTG and DNASTSSAQSRTPTGPTQSFSSYG. 3 disordered regions span residues 297–408, 414–433, and 452–473; these read PDQN…VTSA, HEQPDDPVTPPLSPESDQSL, and DLSSEIVRDRAEPSEPRNPFNT. Over residues 359–371 the composition is skewed to basic residues; that stretch reads RHSRAHARRRKKR. A compositionally biased stretch (low complexity) spans 383 to 394; it reads SDSASVSVSDES. Positions 396-408 are enriched in polar residues; the sequence is YTESASAPSVTSA. The segment covering 452–466 has biased composition (basic and acidic residues); that stretch reads DLSSEIVRDRAEPSE.

It belongs to the MDM34 family. Component of the ER-mitochondria encounter structure (ERMES) or MDM complex, composed of mmm1, mdm10, mdm12 and mdm34.

It localises to the mitochondrion outer membrane. Its function is as follows. Component of the ERMES/MDM complex, which serves as a molecular tether to connect the endoplasmic reticulum (ER) and mitochondria. Components of this complex are involved in the control of mitochondrial shape and protein biogenesis, and function in nonvesicular lipid trafficking between the ER and mitochondria. Mdm34 is required for the interaction of the ER-resident membrane protein mmm1 and the outer mitochondrial membrane-resident beta-barrel protein mdm10. The chain is Mitochondrial distribution and morphology protein 34-1 from Penicillium rubens (strain ATCC 28089 / DSM 1075 / NRRL 1951 / Wisconsin 54-1255) (Penicillium chrysogenum).